A 37-amino-acid polypeptide reads, in one-letter code: Large ribosomal subunit protein bL36 (37 aa).

The protein belongs to the bacterial ribosomal protein bL36 family.

This is Large ribosomal subunit protein bL36 from Mycoplasmopsis synoviae (strain 53) (Mycoplasma synoviae).